The sequence spans 117 residues: ATP-dependent Clp protease adapter protein ClpS 1 (117 aa).

The protein belongs to the ClpS family. In terms of assembly, binds to the N-terminal domain of the chaperone ClpA.

Involved in the modulation of the specificity of the ClpAP-mediated ATP-dependent protein degradation. The polypeptide is ATP-dependent Clp protease adapter protein ClpS 1 (Agrobacterium fabrum (strain C58 / ATCC 33970) (Agrobacterium tumefaciens (strain C58))).